Here is a 313-residue protein sequence, read N- to C-terminus: Fructose-1,6-bisphosphatase class 1 (313 aa).

Mg(2+)-binding residues include E91, D112, L114, and D115. Residues 115–118, Y223, and K254 contribute to the substrate site; that span reads DGSS. Residue E260 coordinates Mg(2+).

Belongs to the FBPase class 1 family. In terms of assembly, homotetramer. Mg(2+) is required as a cofactor.

Its subcellular location is the cytoplasm. It carries out the reaction beta-D-fructose 1,6-bisphosphate + H2O = beta-D-fructose 6-phosphate + phosphate. Its pathway is carbohydrate biosynthesis; gluconeogenesis. This Geobacter sulfurreducens (strain ATCC 51573 / DSM 12127 / PCA) protein is Fructose-1,6-bisphosphatase class 1.